Reading from the N-terminus, the 231-residue chain is WAP four-disulfide core domain protein 3 (231 aa).

A signal peptide spans 1 to 24 (MMLSCLFLLKALLALGSLESWITA). WAP domains follow at residues 26–68 (EHAK…CRDI), 69–114 (PKGR…VVPI), 119–162 (LAEF…LGDI), and 163–207 (EGGR…VPPV). 16 disulfides stabilise this stretch: cysteine 33–cysteine 57, cysteine 40–cysteine 61, cysteine 44–cysteine 56, cysteine 50–cysteine 65, cysteine 76–cysteine 102, cysteine 85–cysteine 106, cysteine 89–cysteine 101, cysteine 95–cysteine 110, cysteine 126–cysteine 150, cysteine 133–cysteine 154, cysteine 137–cysteine 149, cysteine 143–cysteine 158, cysteine 170–cysteine 195, cysteine 178–cysteine 199, cysteine 182–cysteine 194, and cysteine 188–cysteine 203. Asparagine 107 is a glycosylation site (N-linked (GlcNAc...) asparagine). N-linked (GlcNAc...) asparagine glycosylation is present at asparagine 217.

In terms of tissue distribution, ubiquitously expressed.

The protein resides in the secreted. This chain is WAP four-disulfide core domain protein 3 (WFDC3), found in Homo sapiens (Human).